The primary structure comprises 342 residues: N-acetyl-gamma-glutamyl-phosphate reductase (342 aa).

C146 is a catalytic residue.

This sequence belongs to the NAGSA dehydrogenase family. Type 1 subfamily.

It is found in the cytoplasm. It catalyses the reaction N-acetyl-L-glutamate 5-semialdehyde + phosphate + NADP(+) = N-acetyl-L-glutamyl 5-phosphate + NADPH + H(+). It participates in amino-acid biosynthesis; L-arginine biosynthesis; N(2)-acetyl-L-ornithine from L-glutamate: step 3/4. Functionally, catalyzes the NADPH-dependent reduction of N-acetyl-5-glutamyl phosphate to yield N-acetyl-L-glutamate 5-semialdehyde. In Thermobifida fusca (strain YX), this protein is N-acetyl-gamma-glutamyl-phosphate reductase.